Here is a 624-residue protein sequence, read N- to C-terminus: Serine/threonine-protein kinase ppk35 (624 aa).

In terms of domain architecture, Protein kinase spans 162–465; the sequence is FDLLVKLGQG…TIEIQKHPFF (304 aa). Residues 168-176 and Lys191 each bind ATP; that span reads LGQGGYGSV. Asp285 serves as the catalytic Proton acceptor. Positions 466-548 constitute an AGC-kinase C-terminal domain; that stretch reads KRLHWNGLRK…KYRPNARKPL (83 aa). The span at 545-559 shows a compositional bias: basic residues; that stretch reads RKPLVGRHREKRQLR. The interval 545–617 is disordered; the sequence is RKPLVGRHRE…VHRLLERKGK (73 aa). A compositionally biased stretch (basic and acidic residues) spans 560 to 574; the sequence is KEKPEKKNNSTKQKD. Positions 596-609 are enriched in basic residues; that stretch reads SKTKGHKTKSSRVH.

Belongs to the protein kinase superfamily. Ser/Thr protein kinase family.

The protein resides in the cytoplasm. Its subcellular location is the nucleus. The protein localises to the nucleolus. It catalyses the reaction L-seryl-[protein] + ATP = O-phospho-L-seryl-[protein] + ADP + H(+). It carries out the reaction L-threonyl-[protein] + ATP = O-phospho-L-threonyl-[protein] + ADP + H(+). Its function is as follows. Has a role in meiosis. This Schizosaccharomyces pombe (strain 972 / ATCC 24843) (Fission yeast) protein is Serine/threonine-protein kinase ppk35 (ppk35).